The sequence spans 216 residues: MATKLTERQQEILDLIRQTVARTGFPPTRAEIAQALGFRSPNAAEDHLKALARKGAIELTAGASRGIRLKVPDSATPSAQLTHPLLAQLVLPLVGRVAAGSPILASEHVEREVGVDPGLFAQTPDYLLKVRGMSMRDAGILEGDLLAVKRAAEARNGQIVVARLGDEVTVKRLQRQNGRIELLPENPDFAPIVVANTDEFALEGIAVGLIRTQPLH.

A DNA-binding region (H-T-H motif) is located at residues Arg-29 to Lys-49. Catalysis depends on for autocatalytic cleavage activity residues Ser-134 and Lys-171.

It belongs to the peptidase S24 family. Homodimer.

It catalyses the reaction Hydrolysis of Ala-|-Gly bond in repressor LexA.. Its function is as follows. Represses a number of genes involved in the response to DNA damage (SOS response), including recA and lexA. In the presence of single-stranded DNA, RecA interacts with LexA causing an autocatalytic cleavage which disrupts the DNA-binding part of LexA, leading to derepression of the SOS regulon and eventually DNA repair. This Bordetella bronchiseptica (strain ATCC BAA-588 / NCTC 13252 / RB50) (Alcaligenes bronchisepticus) protein is LexA repressor.